The primary structure comprises 158 residues: MNKQRGTYSEVSLAQDPKRQQRKLKGNKSSISGTKQEIFQVELNLQNASSDHQGNDKTYHCKGLLPPPERLTAEVLGIICIVLMATVLKTIVLIPCIGVLEQNNFSLNRRMQKACDCGHCPEEWITYSNSCYYIGKERRTWEEGVCWPVLQRTLICFL.

The span at 1–12 shows a compositional bias: polar residues; it reads MNKQRGTYSEVS. The segment at 1-30 is disordered; the sequence is MNKQRGTYSEVSLAQDPKRQQRKLKGNKSS. Residues 1-74 lie on the Cytoplasmic side of the membrane; that stretch reads MNKQRGTYSE…LPPPERLTAE (74 aa). A helical membrane pass occupies residues 75–95; it reads VLGIICIVLMATVLKTIVLIP. The Extracellular segment spans residues 96 to 158; the sequence is CIGVLEQNNF…VLQRTLICFL (63 aa).

As to quaternary structure, can form disulfide-bonded heterodimer with CD94. Natural killer cells.

Its subcellular location is the membrane. Functionally, may play a role as a receptor for the recognition of MHC class I HLA-E molecules by NK cells. This chain is NKG2-F type II integral membrane protein (KLRC4), found in Pan troglodytes (Chimpanzee).